We begin with the raw amino-acid sequence, 887 residues long: Tubulin polyglutamylase TTLL7 (887 aa).

The interval 1-21 (MPSLPQEGVIQGPSPLDLNTE) is disordered. One can recognise a TTL domain in the interval 38–390 (KGTITANVAG…RTSDKRRNLA (353 aa)). ATP-binding positions include K160, 166–167 (MG), 188–191 (QEYI), and 201–203 (KFD). R227 serves as a coordination point for L-glutamate. 249-250 (TN) serves as a coordination point for ATP. L-glutamate is bound by residues Y251, S252, and K271. Mg(2+)-binding residues include D336, E349, and N351. K367 contacts L-glutamate. A c-MTBD region region spans residues 388-450 (NLAKQKAEAQ…ISREEHENRH (63 aa)). Disordered stretches follow at residues 519 to 621 (MGKT…TRPF) and 651 to 676 (LPHSNDACSTNSQVSESLRQLKTKEQ). The segment covering 548–560 (SSDSSYDSSSSSS) has biased composition (low complexity). 2 stretches are compositionally biased toward polar residues: residues 593–621 (QQPSSIRRSVSCPRSISAQSPSSGDTRPF) and 656–670 (DACSTNSQVSESLRQ).

It belongs to the tubulin--tyrosine ligase family. In terms of assembly, interacts with both alpha- and beta-tubulin (via C-terminal tubulin tails). It depends on Mg(2+) as a cofactor. In terms of tissue distribution, highly expressed in the nervous system including spinal cord, thalamus, hippocampus, hypothalamus and cerebellum.

The protein resides in the cell projection. The protein localises to the cilium. Its subcellular location is the cytoplasm. It localises to the cytoskeleton. It is found in the cilium basal body. The protein resides in the dendrite. The protein localises to the perikaryon. The catalysed reaction is L-glutamyl-[protein] + L-glutamate + ATP = gamma-L-glutamyl-L-glutamyl-[protein] + ADP + phosphate + H(+). The enzyme catalyses (L-glutamyl)(n)-gamma-L-glutamyl-L-glutamyl-[protein] + L-glutamate + ATP = (L-glutamyl)(n+1)-gamma-L-glutamyl-L-glutamyl-[protein] + ADP + phosphate + H(+). Functionally, polyglutamylase which modifies tubulin, generating polyglutamate side chains of variable lengths on the gamma-carboxyl group of specific glutamate residues within the C-terminal tail of tubulin. Mediates both ATP-dependent initiation and elongation steps of the polyglutamylation reaction. Preferentially modifies the beta-tubulin tail over an alpha-tail. Competes with monoglycylase TTLL3 for modification site on beta-tubulin substrate, thereby creating an anticorrelation between glycylation and glutamylation reactions. Required for neurite growth; responsible for the strong increase in tubulin polyglutamylation during postnatal neuronal maturation. This chain is Tubulin polyglutamylase TTLL7, found in Homo sapiens (Human).